The primary structure comprises 458 residues: RuvB-like helicase 1 (458 aa).

71–78 (GGPGTGKT) contributes to the ATP binding site.

It belongs to the RuvB family. May form heterododecamers with hel-2/rvb2. Component of the SWR1 chromatin remodeling complex, the INO80 chromatin remodeling complex, and of the R2TP complex.

Its subcellular location is the nucleus. The catalysed reaction is ATP + H2O = ADP + phosphate + H(+). Its function is as follows. DNA helicase which participates in several chromatin remodeling complexes, including the SWR1 and the INO80 complexes. The SWR1 complex mediates the ATP-dependent exchange of histone H2A for the H2A variant H2A.Z leading to transcriptional regulation of selected genes by chromatin remodeling. The INO80 complex remodels chromatin by shifting nucleosomes and is involved in DNA repair. Also involved in pre-rRNA processing. The polypeptide is RuvB-like helicase 1 (hel-1) (Neurospora crassa (strain ATCC 24698 / 74-OR23-1A / CBS 708.71 / DSM 1257 / FGSC 987)).